Consider the following 238-residue polypeptide: Probable solute-binding protein AdeT2 (238 aa).

The protein belongs to the bacterial solute-binding protein 7 family.

Its function is as follows. Mediates antimicrobial resistance via active efflux. Contributes to resistance to antibiotics such as chloramphenicol, erythromycin and novobiocin. May be part of a tripartite ATP-independent periplasmic (TRAP) transport system. The protein is Probable solute-binding protein AdeT2 of Acinetobacter baumannii.